We begin with the raw amino-acid sequence, 223 residues long: Methanol utilization control regulatory protein MoxX (223 aa).

The 118-residue stretch at 16-133 (QILIVDDHPV…EICAAFTEVA (118 aa)) folds into the Response regulatory domain. The HTH luxR-type domain maps to 155–220 (PGTSAPRLTG…DLVVKGIRYF (66 aa)). A DNA-binding region (H-T-H motif) is located at residues 179–198 (YRDIADRACISYKTVSNVSL).

In terms of processing, phosphorylated by MoxY.

The protein localises to the cytoplasm. Functionally, member of the two-component regulatory system MoxY/MoxX probably involved in the regulation of the methanol dehydrogenase expression. This chain is Methanol utilization control regulatory protein MoxX (moxX), found in Paracoccus denitrificans.